Consider the following 746-residue polypeptide: MEGPEIQFSEAVIDNGRFGKRVIRFETGRLAKQAAGAAMVYIDEDTALLSATTAGKHPREGFDFFPLTVDVEERMYAAGRIPGSFFRREGRPSTEAILACRLMDRPLRPAFIKGLRNEVQIVVTVLAINPDELYDVVAINASSMSTQLSGLPFSGPIGGVRVALVADEHGSQWVAFPKHSQLENSVFNMVVAGRVAGDDVAIMMVEAEATDNSWNLIKEQGATAPTEEVVSEGLEAAKPFIKALCDAQADLAARAAKPTVEFPVFLDYEDDAYAAVEAAAAEKLAAVFQIADKQERDAASDQLKDDVTSSLAGQFEGREKELSAAFRSVTKHVVRQRILKDQIRIDGRGLTDIRQLTAEVEVLPRVHGSAIFERGETQIMGVTTLNMLKMEQQIDSLSPVTRKRYMHNYNFPPYSTGETGRVGSPKRREIGHGALAERALVPVLPSREEFPYAIRQVSEALSSNGSTSMGSVCASTLSMLNAGVPLKAAVAGIAMGLVSDQVDGQTRYAALTDILGAEDAFGDMDFKVAGTSEFVTAIQLDTKLDGIPASVLAAALKQAREARLHILEVINSAIDTPDELSEFAPRVIAVKIPVDKIGEVIGPKGKMINQIQEDTGADISIEDDGTVYIGATNGPSADAARSAINAIANPQVPEIGERYLGTVVKTTTFGAFISLTPGKDGLLHISELRKIAGGKRVDNVEDVVSVGQKIQVEITKIDDRGKLSLSPVIAEEEGAENAEVAEAAAE.

Aspartate 519 and aspartate 525 together coordinate Mg(2+). In terms of domain architecture, KH spans 585–644 (PRVIAVKIPVDKIGEVIGPKGKMINQIQEDTGADISIEDDGTVYIGATNGPSADAARSAI). The S1 motif domain occupies 656-728 (GERYLGTVVK…DRGKLSLSPV (73 aa)).

It belongs to the polyribonucleotide nucleotidyltransferase family. Mg(2+) is required as a cofactor.

The protein localises to the cytoplasm. The catalysed reaction is RNA(n+1) + phosphate = RNA(n) + a ribonucleoside 5'-diphosphate. In terms of biological role, involved in mRNA degradation. Catalyzes the phosphorolysis of single-stranded polyribonucleotides processively in the 3'- to 5'-direction. In Arthrobacter sp. (strain FB24), this protein is Polyribonucleotide nucleotidyltransferase.